We begin with the raw amino-acid sequence, 157 residues long: Transcriptional regulator MraZ (157 aa).

SpoVT-AbrB domains follow at residues 7 to 54 (TYTM…GTSL) and 83 to 126 (TEML…EPER).

The protein belongs to the MraZ family. As to quaternary structure, forms oligomers.

The protein localises to the cytoplasm. The protein resides in the nucleoid. This chain is Transcriptional regulator MraZ, found in Azorhizobium caulinodans (strain ATCC 43989 / DSM 5975 / JCM 20966 / LMG 6465 / NBRC 14845 / NCIMB 13405 / ORS 571).